The following is a 329-amino-acid chain: Malate dehydrogenase (329 aa).

12–18 (GAAGQIG) lines the NAD(+) pocket. The substrate site is built by arginine 95 and arginine 101. NAD(+) is bound by residues asparagine 108, glutamine 115, and 132–134 (VGN). Positions 134 and 165 each coordinate substrate. The Proton acceptor role is filled by histidine 190.

The protein belongs to the LDH/MDH superfamily. MDH type 2 family.

The catalysed reaction is (S)-malate + NAD(+) = oxaloacetate + NADH + H(+). Its function is as follows. Catalyzes the reversible oxidation of malate to oxaloacetate. This chain is Malate dehydrogenase, found in Ralstonia nicotianae (strain ATCC BAA-1114 / GMI1000) (Ralstonia solanacearum).